A 187-amino-acid chain; its full sequence is Ribosome-recycling factor (187 aa).

The protein belongs to the RRF family.

The protein resides in the cytoplasm. Its function is as follows. Responsible for the release of ribosomes from messenger RNA at the termination of protein biosynthesis. May increase the efficiency of translation by recycling ribosomes from one round of translation to another. The chain is Ribosome-recycling factor from Bradyrhizobium sp. (strain ORS 278).